The primary structure comprises 90 residues: Large ribosomal subunit protein bL27 (90 aa).

Positions 1 to 21 (MASKKAGGSTRNGRDSEAKRL) are disordered.

It belongs to the bacterial ribosomal protein bL27 family.

The polypeptide is Large ribosomal subunit protein bL27 (Neisseria gonorrhoeae (strain ATCC 700825 / FA 1090)).